A 357-amino-acid polypeptide reads, in one-letter code: Protein RecA (357 aa).

Glycine 71–threonine 78 contributes to the ATP binding site.

Belongs to the RecA family.

It is found in the cytoplasm. In terms of biological role, can catalyze the hydrolysis of ATP in the presence of single-stranded DNA, the ATP-dependent uptake of single-stranded DNA by duplex DNA, and the ATP-dependent hybridization of homologous single-stranded DNAs. It interacts with LexA causing its activation and leading to its autocatalytic cleavage. This is Protein RecA from Ehrlichia canis (strain Jake).